We begin with the raw amino-acid sequence, 516 residues long: MQRRDFLKYSVALGVASALPLWSRAVFAAERPTLPIPDLLTTDARNRIQLTIGAGQSTFGGKTATTWGYNGNLLGPAVKLQRGKAVTVDIYNQLTEETTLHWHGLEVPGEVDGGPQGIIPPGGKRSVTLNVDQPAATCWFHPHQHGKTGRQVAMGLAGLVVIEDDEILKLMLPKQWGIDDVPVIVQDKKFSADGQIDYQLDVMTAAVGWFGDTLLTNGAIYPQHAAPRGWLRLRLLNGCNARSLNFATSDNRPLYVIASDGGLLPEPVKVSELPVLMGERFEVLVEVNDNKPFDLVTLPVSQMGMAIAPFDKPHPVMRIQPIAISASGALPDTLSSLPALPSLEGLTVRKLQLSMDPMLDMMGMQMLMEKYGDQAMAGMDHSQMMGHMGHGNMNHMNHGGKFDFHHANKINGQAFDMNKPMFAAAKGQYERWVISGVGDMMLHPFHIHGTQFRILSENGKPPAAHRAGWKDTVKVEGNVSEVLVKFNHDAPKEHAYMAHCHLLEHEDTGMMLGFTV.

Positions methionine 1 to alanine 28 form a signal peptide, tat-type signal. Plastocyanin-like domains are found at residues glycine 55–aspartate 165 and proline 227–proline 292. Cu cation-binding residues include histidine 101, histidine 103, histidine 141, and histidine 143. The interval methionine 355 to glycine 400 is methionine-rich region. The Plastocyanin-like 3 domain maps to phenylalanine 402–valine 516. Cu cation-binding residues include histidine 443, histidine 446, histidine 448, histidine 499, cysteine 500, histidine 501, and histidine 505.

This sequence belongs to the multicopper oxidase family. In terms of assembly, monomer. Cu cation serves as cofactor. In terms of processing, exported by the Tat system. The position of the signal peptide cleavage has been experimentally proven.

The protein localises to the periplasm. The enzyme catalyses 4 Cu(+) + O2 + 4 H(+) = 4 Cu(2+) + 2 H2O. With respect to regulation, ferroxidase and phenoloxidase activities are enhanced considerably in the presence of excess copper ions. A labile regulatory copper ion near the T1 copper site is important for the copper associated activation of enzyme activity. Ag(+) acts as a potent inhibitor of oxidase activity by binding at Cu(+) binding sites, blocking Cu(+) substrate binding and oxidation. pPD oxidase activity is strongly inhibited by sodium azide, an inhibitor of the electron transfer. Functionally, multicopper oxidase involved in copper homeostasis and copper tolerance under aerobic conditions. Is responsible for the oxidation of Cu(+) to the less harmful Cu(2+) in the periplasm, thereby preventing Cu(+) from entering the cytoplasm. Probably primarily functions as a cuprous oxidase in vivo. In terms of biological role, in vitro, in the presence of excess copper ions, exhibits ferroxidase and phenoloxidase activities. Fe(2+) is an excellent substrate in the presence of excess Cu(2+), but is inactive in the absence of Cu(2+). Oxidizes the phenolate iron siderophores enterobactin, 2,3-dihydroxybenzoate (2,3-DHB) and 3-hydroxyanthranilate (3-HAA). Oxidation and thus inactivation of enterobactin could protect cells from the interaction of enterobactin with copper and play a central role as an interface between copper detoxification and iron homeostasis. Also oxidizes a variety of phenolic model substrates, including 2,2'-azinobis(3-ethylbenzthiazolinesulfonic acid) (ABTS), p-phenylenediamine (pPD), 2,6-dimethoxyphenol (2,6-DMP) and 3,4-dihydroxybenzoic acid (3,4-DHB). This Escherichia coli (strain K12) protein is Multicopper oxidase CueO.